The sequence spans 657 residues: Translation factor GUF1, mitochondrial (657 aa).

Residues 1 to 39 (MRGCLQSVKWLTSALRPSQSLASSTRYPRRLLSTSAPRN) constitute a mitochondrion transit peptide. A tr-type G domain is found at 59-239 (ERFRNFCIVA…TVIEQIPAPV (181 aa)). Residues 109-116 (TVKAQTCS), 173-177 (LAFAE), and 227-230 (LLPT) contribute to the GTP site.

This sequence belongs to the TRAFAC class translation factor GTPase superfamily. Classic translation factor GTPase family. LepA subfamily.

The protein resides in the mitochondrion inner membrane. It catalyses the reaction GTP + H2O = GDP + phosphate + H(+). In terms of biological role, promotes mitochondrial protein synthesis. May act as a fidelity factor of the translation reaction, by catalyzing a one-codon backward translocation of tRNAs on improperly translocated ribosomes. Binds to mitochondrial ribosomes in a GTP-dependent manner. This chain is Translation factor GUF1, mitochondrial, found in Ajellomyces capsulatus (strain NAm1 / WU24) (Darling's disease fungus).